Consider the following 1015-residue polypeptide: PHD finger protein 20-like protein 1 (1015 aa).

The region spanning 11-71 (ITFEIGARLE…SNRLRPLERP (61 aa)) is the Tudor 1 domain. Residues lysine 75 and lysine 79 each participate in a glycyl lysine isopeptide (Lys-Gly) (interchain with G-Cter in SUMO2) cross-link. The Tudor 2 domain maps to 85-141 (FDFKAGEEVLARWTDCRYYPAKIEAINKEGTFTVQFYDGVIRCLKRMHIKAMPEDAK). Disordered regions lie at residues 183 to 206 (AKNKTGSKPRTSANSNKEKERDGG) and 309 to 367 (EQAI…KAPK). Composition is skewed to polar residues over residues 186–197 (KTGSKPRTSANS) and 315–346 (KPQSQKKNEAVISSSANTQKPALLSSTLSSGK). Serine 368 is subject to Phosphoserine. Disordered stretches follow at residues 389–455 (VINK…SSVP) and 478–513 (CGSEVTGSQAPDSSYPGGECPREEKEETPLFANPTS). Basic residues predominate over residues 404–415 (PCKHSERRRRSQ). Serine 432 carries the phosphoserine modification. Polar residues-rich tracts occupy residues 443 to 453 (SISSQNQQESS) and 480 to 489 (SEVTGSQAPD). Lysine 530 is covalently cross-linked (Glycyl lysine isopeptide (Lys-Gly) (interchain with G-Cter in SUMO2)). Positions 539 to 565 (EKTSTAFGKRKEKDKERKEKRDKDHYK) are enriched in basic and acidic residues. The segment at 539 to 585 (EKTSTAFGKRKEKDKERKEKRDKDHYKPKQKKKKKKKKKSKQHDYSD) is disordered. Residues 566 to 579 (PKQKKKKKKKKKSK) are compositionally biased toward basic residues. The segment at 681–729 (IVRCICELDEENGFMIQCEECLCWQHSVCMGLLEDSIPEQYICYICRDP) adopts a PHD-type zinc-finger fold. A Glycyl lysine isopeptide (Lys-Gly) (interchain with G-Cter in SUMO2) cross-link involves residue lysine 849. The span at 859 to 878 (HSYQKPQSFSQDCHSLTDPG) shows a compositional bias: polar residues. The tract at residues 859–889 (HSYQKPQSFSQDCHSLTDPGSSDDDDVSSFE) is disordered. The segment covering 879–889 (SSDDDDVSSFE) has biased composition (acidic residues). Lysine 907 bears the N6-acetyllysine mark.

As to quaternary structure, interacts with methylated DNMT1 (DNMT1K142me1). Interacts with SOX2.

The protein localises to the nucleus. Functionally, is a negative regulator of proteasomal degradation of a set of methylated proteins, including DNMT1 and SOX2. Involved in the maintainance of embryonic stem cells pluripotency, through the regulation of SOX2 levels. The protein is PHD finger protein 20-like protein 1 (Phf20l1) of Rattus norvegicus (Rat).